The chain runs to 955 residues: Coiled-coil domain-containing protein 146 (955 aa).

A compositionally biased stretch (acidic residues) spans 1-17 (MEDSSTDTEKEEEEEKD). The disordered stretch occupies residues 1–22 (MEDSSTDTEKEEEEEKDEKDQE). Coiled-coil stretches lie at residues 114 to 141 (EAFS…KERE), 169 to 321 (GEME…AREN), 400 to 461 (STLS…LLRM), 534 to 640 (KAHQ…RNES), and 667 to 832 (NGEI…MKQA).

As to quaternary structure, interacts with CCDC38 and CCDC42. Interacts with intraflagellar transport proteins IFT20 and IFT88. In terms of assembly, (Microbial infection) Interacts with Chlamydia trachomatis incM/YT288. In host cells infected with C.trachomatis incM, CCDC146 is recruited to the periphery of the pathogen-containing vacuole but recruitment is not dependent on incM. In terms of tissue distribution, widely expressed.

The protein localises to the cytoplasm. It is found in the cytoskeleton. Its subcellular location is the microtubule organizing center. The protein resides in the centrosome. It localises to the centriole. The protein localises to the flagellum axoneme. It is found in the cilium basal body. Its subcellular location is the midbody. Functionally, essential for sperm flagellum biogenesis and male fertility. In Homo sapiens (Human), this protein is Coiled-coil domain-containing protein 146 (CCDC146).